The primary structure comprises 499 residues: Glutamyl-tRNA(Gln) amidotransferase subunit A (499 aa).

Active-site charge relay system residues include K76 and S151. Catalysis depends on S175, which acts as the Acyl-ester intermediate.

The protein belongs to the amidase family. GatA subfamily. Heterotrimer of A, B and C subunits.

It catalyses the reaction L-glutamyl-tRNA(Gln) + L-glutamine + ATP + H2O = L-glutaminyl-tRNA(Gln) + L-glutamate + ADP + phosphate + H(+). In terms of biological role, allows the formation of correctly charged Gln-tRNA(Gln) through the transamidation of misacylated Glu-tRNA(Gln) in organisms which lack glutaminyl-tRNA synthetase. The reaction takes place in the presence of glutamine and ATP through an activated gamma-phospho-Glu-tRNA(Gln). The chain is Glutamyl-tRNA(Gln) amidotransferase subunit A from Rhodopirellula baltica (strain DSM 10527 / NCIMB 13988 / SH1).